Reading from the N-terminus, the 31-residue chain is Basic phospholipase A2 13 (31 aa).

This sequence belongs to the phospholipase A2 family. Group I subfamily. Requires Ca(2+) as cofactor. Expressed by the venom gland.

The protein localises to the secreted. The catalysed reaction is a 1,2-diacyl-sn-glycero-3-phosphocholine + H2O = a 1-acyl-sn-glycero-3-phosphocholine + a fatty acid + H(+). Its function is as follows. Snake venom phospholipase A2 (PLA2) that inhibits neuromuscular transmission by blocking acetylcholine release from the nerve termini. PLA2 catalyzes the calcium-dependent hydrolysis of the 2-acyl groups in 3-sn-phosphoglycerides. This chain is Basic phospholipase A2 13, found in Bungarus fasciatus (Banded krait).